The following is a 537-amino-acid chain: 4-coumarate--CoA ligase (537 aa).

Residues S189, S190, G191, T192, T193, and K197 each contribute to the ATP site. (E)-4-coumaroyl-AMP contacts are provided by Y239 and S243. K260 lines the CoA pocket. Positions 262–331 are SBD1; sequence NLTTCLELIQ…ERFPKAIFGQ (70 aa). Residues A309, Q331, G332, T336, and M344 each coordinate (E)-4-coumaroyl-AMP. Residues Q331, G332, and T336 each coordinate ATP. Residues 332-399 are SBD2; that stretch reads GYGMTEAGPV…IRGPEIMKGY (68 aa). D420 and R435 together coordinate ATP. The (E)-4-coumaroyl-AMP site is built by K437 and K441. The CoA site is built by K443 and G444. K524 provides a ligand contact to ATP.

Belongs to the ATP-dependent AMP-binding enzyme family. The cofactor is Mg(2+).

It catalyses the reaction (E)-4-coumarate + ATP + CoA = (E)-4-coumaroyl-CoA + AMP + diphosphate. The catalysed reaction is (E)-4-coumarate + ATP + H(+) = (E)-4-coumaroyl-AMP + diphosphate. It carries out the reaction (E)-4-coumaroyl-AMP + CoA = (E)-4-coumaroyl-CoA + AMP + H(+). It functions in the pathway phytoalexin biosynthesis; 3,4',5-trihydroxystilbene biosynthesis; 3,4',5-trihydroxystilbene from trans-4-coumarate: step 1/2. Functionally, carboxylate--CoA ligase that may use 4-coumarate as substrate. Follows a two-step reaction mechanism, wherein the carboxylate substrate first undergoes adenylation by ATP, followed by a thioesterification in the presence of CoA to yield the final CoA thioester. The sequence is that of 4-coumarate--CoA ligase (4CL) from Pinus taeda (Loblolly pine).